Here is a 496-residue protein sequence, read N- to C-terminus: Putative BTB/POZ domain and WD-repeat protein R61 (496 aa).

Residues 8–78 (SNINLILNDE…MFSDIDIYKN (71 aa)) form the BTB domain. WD repeat units lie at residues 149–189 (KFPR…FNSK), 208–248 (IFDN…KEFQ), 250–285 (DYKI…RKVL), 291–330 (KSIG…IIKW), 333–371 (VSKS…KILE), and 422–464 (MYFS…DIIY).

Belongs to the mimivirus BTB/WD family.

This Acanthamoeba polyphaga (Amoeba) protein is Putative BTB/POZ domain and WD-repeat protein R61.